A 371-amino-acid chain; its full sequence is tRNA 2-selenouridine synthase (371 aa).

The Rhodanese domain maps to 12 to 135 (FLDDVPMMDM…MRTFLLDTTQ (124 aa)). C95 serves as the catalytic S-selanylcysteine intermediate.

Belongs to the SelU family. Monomer.

The enzyme catalyses 5-methylaminomethyl-2-thiouridine(34) in tRNA + selenophosphate + (2E)-geranyl diphosphate + H2O + H(+) = 5-methylaminomethyl-2-selenouridine(34) in tRNA + (2E)-thiogeraniol + phosphate + diphosphate. It carries out the reaction 5-methylaminomethyl-2-thiouridine(34) in tRNA + (2E)-geranyl diphosphate = 5-methylaminomethyl-S-(2E)-geranyl-thiouridine(34) in tRNA + diphosphate. It catalyses the reaction 5-methylaminomethyl-S-(2E)-geranyl-thiouridine(34) in tRNA + selenophosphate + H(+) = 5-methylaminomethyl-2-(Se-phospho)selenouridine(34) in tRNA + (2E)-thiogeraniol. The catalysed reaction is 5-methylaminomethyl-2-(Se-phospho)selenouridine(34) in tRNA + H2O = 5-methylaminomethyl-2-selenouridine(34) in tRNA + phosphate. Its function is as follows. Involved in the post-transcriptional modification of the uridine at the wobble position (U34) of tRNA(Lys), tRNA(Glu) and tRNA(Gln). Catalyzes the conversion of 2-thiouridine (S2U-RNA) to 2-selenouridine (Se2U-RNA). Acts in a two-step process involving geranylation of 2-thiouridine (S2U) to S-geranyl-2-thiouridine (geS2U) and subsequent selenation of the latter derivative to 2-selenouridine (Se2U) in the tRNA chain. This is tRNA 2-selenouridine synthase from Pseudomonas entomophila (strain L48).